Here is a 301-residue protein sequence, read N- to C-terminus: MSGFYKGVAAEQETLFTTADKKLMRSTKFPASYDTKVDMKKVNIEVLKPWIATRLNELIGFEDEVVINFVYGMLEEAVEASKTSDSQNESTLDPRKVQLNLTGFLESNATAFTEELWSLIISASQNQYGIPEKFILEKKEEISKLKDRTEASKEESKTVTDHSNRRESRRESTYYDSRERNGKRTSRSTLDRKRFHDASDTERNRYGRSPSPHSRFSEKPRGERYDIRSYSRSHKERYEDRYRPTRRRERHYRTRDDEGFDEFGRSRDGRWRESRTSYREKHRYDRDALSSESDSGTQKHD.

The PWI domain occupies 26–137 (STKFPASYDT…YGIPEKFILE (112 aa)). Serine 86 carries the post-translational modification Phosphoserine. Basic and acidic residues-rich tracts occupy residues 145 to 182 (LKDRTEASKEESKTVTDHSNRRESRRESTYYDSRERNG), 189 to 205 (TLDRKRFHDASDTERNR), and 215 to 229 (RFSEKPRGERYDIRS). Positions 145–301 (LKDRTEASKE…ESDSGTQKHD (157 aa)) are disordered. A Phosphoserine modification is found at serine 199. Basic residues predominate over residues 244 to 253 (PTRRRERHYR). The segment covering 254–289 (TRDDEGFDEFGRSRDGRWRESRTSYREKHRYDRDAL) has biased composition (basic and acidic residues). The segment covering 290–301 (SSESDSGTQKHD) has biased composition (polar residues). The residue at position 291 (serine 291) is a Phosphoserine.

It is found in the nucleus. In Schizosaccharomyces pombe (strain 972 / ATCC 24843) (Fission yeast), this protein is PWI domain-containing protein C825.05c.